A 185-amino-acid polypeptide reads, in one-letter code: Large ribosomal subunit protein bL25 (185 aa).

It belongs to the bacterial ribosomal protein bL25 family. CTC subfamily. Part of the 50S ribosomal subunit; part of the 5S rRNA/L5/L18/L25 subcomplex. Contacts the 5S rRNA. Binds to the 5S rRNA independently of L5 and L18.

In terms of biological role, this is one of the proteins that binds to the 5S RNA in the ribosome where it forms part of the central protuberance. This is Large ribosomal subunit protein bL25 from Chlamydia trachomatis serovar L2 (strain ATCC VR-902B / DSM 19102 / 434/Bu).